A 413-amino-acid polypeptide reads, in one-letter code: Elongation factor 1-alpha (413 aa).

The tr-type G domain occupies Lys-5–Val-211. The interval Gly-14–Ser-21 is G1. Position 14-21 (Gly-14–Ser-21) interacts with GTP. Ser-21 serves as a coordination point for Mg(2+). Positions Gly-60–Asp-64 are G2. The tract at residues Asp-81–Gly-84 is G3. Residues Asp-81 to His-85 and Asn-136 to Asp-139 contribute to the GTP site. Residues Asn-136–Asp-139 are G4. A G5 region spans residues Ser-175 to Phe-177.

The protein belongs to the TRAFAC class translation factor GTPase superfamily. Classic translation factor GTPase family. EF-Tu/EF-1A subfamily.

The protein resides in the cytoplasm. The catalysed reaction is GTP + H2O = GDP + phosphate + H(+). Its function is as follows. GTP hydrolase that promotes the GTP-dependent binding of aminoacyl-tRNA to the A-site of ribosomes during protein biosynthesis. This chain is Elongation factor 1-alpha, found in Methanothermobacter thermautotrophicus (strain ATCC 29096 / DSM 1053 / JCM 10044 / NBRC 100330 / Delta H) (Methanobacterium thermoautotrophicum).